The chain runs to 119 residues: Large ribosomal subunit protein uL14 (119 aa).

Belongs to the universal ribosomal protein uL14 family. As to quaternary structure, part of the 50S ribosomal subunit. Forms a cluster with proteins L3 and L19. In the 70S ribosome, L14 and L19 interact and together make contacts with the 16S rRNA in bridges B5 and B8.

Its function is as follows. Binds to 23S rRNA. Forms part of two intersubunit bridges in the 70S ribosome. The sequence is that of Large ribosomal subunit protein uL14 from Wolbachia sp. subsp. Brugia malayi (strain TRS).